The sequence spans 259 residues: MVGGDEVIANSFLEAGELVSFKRGEDIVSQGDVEDDSVYFLLSGAADVFVNGKRRDDIQRTAPITVGEMSALNPAQKRSATVRAASRQLVALKVEGETFRKVVGENREFLRRVHEDFSGRGRQAILATGISRRTSGWNWTVISLTAGVLSAAAIWYTLRVDGNPVFVRVLLPLVVGLTIFLLTLLADPVYRFFRLGTLCVGAILVDEALQWQVRGSFMGAEFQYQISSSGDPQQATALLAPIVLGALAAYLFWIDTTKR.

Residue 1–120 participates in a nucleoside 3',5'-cyclic phosphate binding; that stretch reads MVGGDEVIAN…RRVHEDFSGR (120 aa). The interval 126 to 229 is TIR-like; that stretch reads LATGISRRTS…AEFQYQISSS (104 aa). 3 consecutive transmembrane segments (helical) span residues 136 to 156, 169 to 189, and 234 to 254; these read GWNW…AIWY, VLLP…ADPV, and QATA…LFWI.

It is found in the cell inner membrane. It carries out the reaction NAD(+) + H2O = ADP-D-ribose + nicotinamide + H(+). Functionally, pycsar (pyrimidine cyclase system for antiphage resistance) provides immunity against bacteriophage. The pyrimidine cyclase (PycC) synthesizes cyclic nucleotides in response to infection; these serve as specific second messenger signals. The signals activate the adjacent effector, leading to bacterial cell death and abortive phage infection. A clade B Pycsar system. Its function is as follows. The effector gene of a two-gene Pycsar system. Expression of this and adjacent uridylate cyclase RsmPycC (AC A0A1V0HUX5) probably confers resistance to bacteriophage. The genes are probably only expressed in response to bacteriophage infection. Probably only responds to cUMP (produced by its cognate NTP cyclase), it may act by degrading NAD(+) and/or by impairing membrane integrity. In Rhodovulum sp. (strain MB263), this protein is Pycsar effector protein RsmPycTIR.